Consider the following 103-residue polypeptide: Large ribosomal subunit protein bL21 (103 aa).

Belongs to the bacterial ribosomal protein bL21 family. As to quaternary structure, part of the 50S ribosomal subunit. Contacts protein L20.

Its function is as follows. This protein binds to 23S rRNA in the presence of protein L20. The sequence is that of Large ribosomal subunit protein bL21 from Mycobacterium leprae (strain Br4923).